Reading from the N-terminus, the 262-residue chain is MPEVPAVRAWPLLLSLALQLGAAAGAPQPLHCAPCSAERLALCPPVPASCPEATRPAGCGCCPTCALPLGACGVATARCARGLSCRALPGEPRPLHALTRGQGACMPAPSAEATETKDPAAPETTSPESTEMTQEQLLDSFHLMATSSEDLPILWNAINNYESMKALEATDIKKWKEPCQRELYKVLDRLAREQQKAGDRLYKFYLPNCNKNGFYHSKQCETSLEGEPGLCWCVYPWSGKKILGSTAVRGDPKCHQYFNSQN.

The signal sequence occupies residues 1-25 (MPEVPAVRAWPLLLSLALQLGAAAG). Positions 28-108 (QPLHCAPCSA…TRGQGACMPA (81 aa)) constitute an IGFBP N-terminal domain. 6 cysteine pairs are disulfide-bonded: Cys32–Cys59, Cys35–Cys61, Cys43–Cys62, Cys50–Cys65, Cys72–Cys85, and Cys79–Cys105. The interval 101–133 (GQGACMPAPSAEATETKDPAAPETTSPESTEMT) is disordered. A compositionally biased stretch (low complexity) spans 121-131 (APETTSPESTE). Residues Ser126, Ser129, and Ser147 each carry the phosphoserine modification. Tyr161 carries the phosphotyrosine modification. A Thyroglobulin type-1 domain is found at 176-254 (KEPCQRELYK…STAVRGDPKC (79 aa)). Intrachain disulfides connect Cys179/Cys209, Cys220/Cys231, and Cys233/Cys254. At Ser245 the chain carries Phosphoserine. Residues 249–251 (RGD) carry the Cell attachment site motif.

In terms of assembly, binds equally well IGF1 and IGF2. Interacts with integrin ITGA5:ITGB1. Interacts with VHL; this interaction inhibits HIF1A degradation.

The protein resides in the secreted. Its function is as follows. Multifunctional protein that plays a critical role in regulating the availability of IGFs such as IGF1 and IGF2 to their receptors and thereby regulates IGF-mediated cellular processes including cell migration, proliferation, differentiation or apoptosis in a cell-type specific manner. Also plays a positive role in cell migration by interacting with integrin ITGA5:ITGB1 through its RGD motif. Mechanistically, binding to integrins leads to activation of focal adhesion kinase/PTK2 and stimulation of the mitogen-activated protein kinase (MAPK) pathway. Regulates cardiomyocyte apoptosis by suppressing HIF-1alpha/HIF1A degradation through ubiquitination. The chain is Insulin-like growth factor-binding protein 1 (IGFBP1) from Sus scrofa (Pig).